A 127-amino-acid chain; its full sequence is Small ribosomal subunit protein uS13 (127 aa).

It belongs to the universal ribosomal protein uS13 family. Part of the 30S ribosomal subunit. Forms a loose heterodimer with protein S19. Forms two bridges to the 50S subunit in the 70S ribosome.

Its function is as follows. Located at the top of the head of the 30S subunit, it contacts several helices of the 16S rRNA. In the 70S ribosome it contacts the 23S rRNA (bridge B1a) and protein L5 of the 50S subunit (bridge B1b), connecting the 2 subunits; these bridges are implicated in subunit movement. Contacts the tRNAs in the A and P-sites. This chain is Small ribosomal subunit protein uS13, found in Roseiflexus sp. (strain RS-1).